Reading from the N-terminus, the 507-residue chain is Inositol-3-phosphate synthase (507 aa).

Residues glycine 70, glycine 71, asparagine 72, asparagine 73, aspartate 143, isoleucine 180, glutamine 190, arginine 193, threonine 230, alanine 231, asparagine 232, threonine 233, glycine 281, serine 282, aspartate 306, serine 309, asparagine 340, asparagine 341, aspartate 342, lysine 355, alanine 391, aspartate 419, and serine 420 each coordinate NAD(+).

It belongs to the myo-inositol 1-phosphate synthase family. NAD(+) serves as cofactor.

Its subcellular location is the cytoplasm. The protein resides in the cytosol. It is found in the nucleus. It carries out the reaction D-glucose 6-phosphate = 1D-myo-inositol 3-phosphate. It participates in polyol metabolism; myo-inositol biosynthesis; myo-inositol from D-glucose 6-phosphate: step 1/2. In terms of biological role, key enzyme in myo-inositol biosynthesis pathway that catalyzes the conversion of glucose 6-phosphate to 1-myo-inositol 1-phosphate in a NAD-dependent manner. The sequence is that of Inositol-3-phosphate synthase from Citrus paradisi (Grapefruit).